We begin with the raw amino-acid sequence, 340 residues long: UDP-glucose 4-epimerase (340 aa).

Residues 16 to 17 (YI), 37 to 42 (IDNNKN), 60 to 61 (DL), 82 to 86 (FAAKT), serine 127, tyrosine 154, lysine 158, and phenylalanine 182 contribute to the NAD(+) site. Residues serine 127 and tyrosine 154 each coordinate substrate. Catalysis depends on tyrosine 154, which acts as the Proton acceptor. Substrate is bound by residues asparagine 183, 199-200 (TL), 216-218 (FLY), arginine 231, and 295-298 (RSWD).

The protein belongs to the NAD(P)-dependent epimerase/dehydratase family. In terms of assembly, homodimer. Requires NAD(+) as cofactor.

The enzyme catalyses UDP-alpha-D-glucose = UDP-alpha-D-galactose. It participates in carbohydrate metabolism; galactose metabolism. Its function is as follows. Involved in the metabolism of galactose. Catalyzes the conversion of UDP-galactose (UDP-Gal) to UDP-glucose (UDP-Glc) through a mechanism involving the transient reduction of NAD. The polypeptide is UDP-glucose 4-epimerase (galE) (Mycoplasma genitalium (strain ATCC 33530 / DSM 19775 / NCTC 10195 / G37) (Mycoplasmoides genitalium)).